The primary structure comprises 337 residues: DNA-directed RNA polymerase subunit alpha (337 aa).

The segment at Met-1–Glu-233 is alpha N-terminal domain (alpha-NTD). The tract at residues Gly-266–Ile-337 is alpha C-terminal domain (alpha-CTD).

This sequence belongs to the RNA polymerase alpha chain family. In terms of assembly, in plastids the minimal PEP RNA polymerase catalytic core is composed of four subunits: alpha, beta, beta', and beta''. When a (nuclear-encoded) sigma factor is associated with the core the holoenzyme is formed, which can initiate transcription.

Its subcellular location is the plastid. The protein resides in the chloroplast. The catalysed reaction is RNA(n) + a ribonucleoside 5'-triphosphate = RNA(n+1) + diphosphate. In terms of biological role, DNA-dependent RNA polymerase catalyzes the transcription of DNA into RNA using the four ribonucleoside triphosphates as substrates. The sequence is that of DNA-directed RNA polymerase subunit alpha from Dioscorea elephantipes (Elephant's foot yam).